The following is a 639-amino-acid chain: Splicing factor 1 (639 aa).

Disordered stretches follow at residues 1–42 and 65–94; these read MATG…VIPP and LRTG…GKRL. Alanine 2 is modified (N-acetylalanine). Serine 14 is modified (phosphoserine). Positions 15–19 match the Nuclear localization signal motif; sequence KKRKR. At serine 20 the chain carries Phosphoserine; by PKG. Serine 80 and serine 82 each carry phosphoserine. Position 87 is a phosphotyrosine (tyrosine 87). Phosphoserine is present on serine 89. Positions 141-222 constitute a KH domain; the sequence is MIPQDEYPEI…ENVKKAVEQI (82 aa). The segment at 277–296 adopts a CCHC-type zinc-finger fold; that stretch reads TVCTKCGGAGHIASDCKFQR. Residues 325 to 639 form a disordered region; that stretch reads VPASVGSTSG…PAPPPPPPQN (315 aa). The segment covering 335-350 has biased composition (low complexity); sequence PATTPLASAPRPAAPA. Over residues 382-394 the composition is skewed to gly residues; it reads MHGGGPGGPGGGP. A compositionally biased stretch (pro residues) spans 418 to 447; that stretch reads NGPPPPWMQPPPPPMNQGPHPPGHHGPPPM. Leucine 463 carries the post-translational modification Phosphoserine. Lysine 467 carries the post-translational modification Omega-N-methylarginine. Over residues 470–499 the composition is skewed to pro residues; that stretch reads MPPPPMGMMPPPPPPPSGQPPPPPSGPLPP. Low complexity-rich tracts occupy residues 515-534 and 542-566; these read SSMA…TTTT and PPWQ…NPTM. Composition is skewed to pro residues over residues 567-591 and 598-608; these read VPLP…PPPG and APPPPPPPPMD. Positions 615–625 are enriched in low complexity; the sequence is MMGMGVAGMPP. Positions 626–639 are enriched in pro residues; it reads FGMPPAPPPPPPQN.

The protein belongs to the BBP/SF1 family. As to quaternary structure, binds U2AF2. Interacts with U1 snRNA. Binds EWSR1, FUS and TAF15. Interacts with RBM17. Post-translationally, phosphorylation on Ser-20 interferes with U2AF2 binding and spliceosome assembly. Isoform 6 is phosphorylated on Ser-463. Detected in lung, ovary, adrenal gland, colon, kidney, muscle, pancreas, thyroid, placenta, brain, liver and heart.

It is found in the nucleus. Necessary for the ATP-dependent first step of spliceosome assembly. Binds to the intron branch point sequence (BPS) 5'-UACUAAC-3' of the pre-mRNA. May act as transcription repressor. The chain is Splicing factor 1 (SF1) from Homo sapiens (Human).